The chain runs to 1085 residues: DNA mismatch repair protein MutS (1085 aa).

Residues 533-564 form a disordered region; sequence DEDLFGEEEQNAPPVGSSNHAVGTQPSADDEA. Residues 548 to 559 are compositionally biased toward polar residues; sequence GSSNHAVGTQPS. 812–819 is a binding site for ATP; the sequence is GPNMSGKS. Positions 997 to 1042 are disordered; sequence ERRAPRSAPPTVPARGDDRRSAGRASSSGAGAARGEQGRTLPDGQL. Low complexity predominate over residues 1019–1031; it reads GRASSSGAGAARG.

This sequence belongs to the DNA mismatch repair MutS family.

Functionally, this protein is involved in the repair of mismatches in DNA. It is possible that it carries out the mismatch recognition step. This protein has a weak ATPase activity. This is DNA mismatch repair protein MutS from Roseiflexus sp. (strain RS-1).